The primary structure comprises 443 residues: tRNA modification GTPase MnmE (443 aa).

Residues Arg23, Glu82, and Lys121 each coordinate (6S)-5-formyl-5,6,7,8-tetrahydrofolate. Residues 215–364 (GTSIVLAGHP…LKQFIQKWIQ (150 aa)) enclose the TrmE-type G domain. Residue Asn225 coordinates K(+). GTP-binding positions include 225–230 (NAGKSS), 244–250 (TDIPGTT), and 269–272 (DSAG). A Mg(2+)-binding site is contributed by Ser229. Positions 244, 246, and 249 each coordinate K(+). Position 250 (Thr250) interacts with Mg(2+). Lys443 is a (6S)-5-formyl-5,6,7,8-tetrahydrofolate binding site.

The protein belongs to the TRAFAC class TrmE-Era-EngA-EngB-Septin-like GTPase superfamily. TrmE GTPase family. In terms of assembly, homodimer. Heterotetramer of two MnmE and two MnmG subunits. K(+) serves as cofactor.

It is found in the cytoplasm. In terms of biological role, exhibits a very high intrinsic GTPase hydrolysis rate. Involved in the addition of a carboxymethylaminomethyl (cmnm) group at the wobble position (U34) of certain tRNAs, forming tRNA-cmnm(5)s(2)U34. The polypeptide is tRNA modification GTPase MnmE (Chlamydia felis (strain Fe/C-56) (Chlamydophila felis)).